The following is a 175-amino-acid chain: Movement protein (175 aa).

A homodimerization region spans residues 30–47 (ADLDDDEEVTTGQEELFL). Residues 50-156 (EQAQARHLFS…QRLTSMERNG (107 aa)) form an RNA-binding region. Disordered stretches follow at residues 58–89 (FSRK…MEYS) and 103–175 (SSSP…VLHR). Residues 63–74 (ISREVPADESRS) are compositionally biased toward basic and acidic residues. Residues Ser-64 and Ser-133 each carry the phosphoserine modification. Polar residues-rich tracts occupy residues 115–141 (PSLT…SQSP) and 148–169 (RLTS…SSTK).

Belongs to the polerovirus movement protein family. In terms of assembly, homodimer. In terms of processing, phosphorylated.

Its subcellular location is the host cell junction. It localises to the host plasmodesma. It is found in the host Golgi apparatus. In terms of biological role, together with movement protein P3a, facilitates long-distance movement of virions in host. Transports viral genome to neighboring plant cells directly through plasmosdesmata, without any budding. The movement protein allows efficient cell to cell propagation, by bypassing the host cell wall barrier. Binds ssRNA. The sequence is that of Movement protein from Beta vulgaris (Sugar beet).